The sequence spans 240 residues: MSFSERPRVTQNGPSMIHLFNVFSKFRKENDYDGLVNYLITNYSQNVKNRTFNFHNTGHIFHMLYAYVPSPSSKERKQIRLDCIENLLESTKNDFKLYEDLIKLMNGDDKCPCELITARLNDNIAYNESLKNKNFDSKPCKLKKEPIDSILFKYSINWKNSLNKKRSLPKSTTTKKSEEKENMDEIEVDASKISSQSSLSNLNGYTIASCVHDYVIEEHQLRAGDEMVSFIKFCKKCGHK.

Belongs to the baculoviridae LEF-5 family.

In terms of biological role, required for late and very late gene expression. The polypeptide is Late expression factor 5 homolog (Tortricidae (ClGV)).